A 2155-amino-acid polypeptide reads, in one-letter code: MNYSSLLRIWVSFIFALVRHQAQPRELMYPFWQNDTRTPKVDDGSSSEIKLAIPVFFFGVPYRTVYVNNNGVVSFNVLVSQFTPESFPLTDGRAFIAPFWADVHNGIRGEIYYRETMDPAILRRATKDIRKYFKDMTTFSATWVFIVTWEEVTFYGGSSTTPVNTFQAVLVSDGSYTFTLFNYYEINWTTGTASGGDPLTGLGGVMAQAGFNGGNLTNFFSLPGSRTPEIVNIQETTNVNVPGRWAFKVDGKEIDPANGCTSRGQFLRRGEVFWDDLNCTIKCRCLDFNNEIYCQEASCSPYEVCEPKGRFFYCSPVETSTCVVFGEPHYHTFDGFLFHFQGSCAYLLARQCLQTSSLPFFSVEAKNEHRGGSAVSWVKELSVEVNGYKILIPKGSYGKVKVNDLVTSLPVTLELGAVKIYQSGMSTAVETDFGLLVTFDGQHYASISIPGSYINSTCGLCGNYNKNPLDDFLRPDGRPAMSVLDLGESWRVYHADWKCGSGCVDNCTQCDAATEALYFGSDYCGFLNKTDGPLWECGTVVDATAFVHSCVYDLCSVRDNGTLLCQAIQAYALVCQALGIPIGDWRIQTGCVSTVRCPSFSHYSVCTSSCPDTCSDLTASQNCATPCTEGCECNEGFVLSTSQCVPLHKCGCDFDGHYYTMGEFFWATANCTVQCLCEEGGDVYCFNKTCRSGEVCAVEDGYQGCFPKRETVCLLSQNQVLHTFDGAAYAFPSELSYTLLKTCPERPEYLEIDINKKKPDAGPAWLRGVRILVADQEVKIGGVGALEVKLNGQDVELPFFHPSGRLEIHRNKNSTTVESKGVVSVQYSDVGLLYIRLSTMYFNCTGGLCGFFNANASDEFCLPNGKCTDNLAVFLESWTTFEEICNGECGDLLKACNNDSELLKFYRSRSRCGIINDPSNSSFLECHGVVNVTAYYRTCLFRLCQSGGNESELCDSVARYASACKNADVEVGPWRTYDFCPLECPENSHFEECMTCTETCETLALGPICVDSCSEGCQCDEGYALQGSQCVPRSECGCNFEGHQLATNETFWVDQDCQIFCYCNGTDNSVHCETIPCRDDEYCMEESGLYYCQPRTDASCIVSGYGHYLTFDGYPFDFQTSCPLILCTTGSRPISDSFPKFIVTAKNEDRDPSLALWVKQVDVNVFGYSIVIHRAYKHTVLVNNERLYLPLKLGQGKINIFSFGFHVVVETDFGLKVVYDWKTFLSITVPRSMQNGTYGLCGRYNGNPDDDLEMPMGLPALSINEFGQSWVKRDTFCQVGCGDRCPSCAKVEGFSKVQQLCSLIPNQNAGFAKCHSKVNPTFFYKNCLFDSCIDGGAVQTACSWLQNYASTCQTQGIAVTGWRNYTSCSVTCPPNSHYESCVSVCQPRCAAIRLKSDCNHYCVEGCQCDAGYVLNGKSCILPHNCGCYSDGKYYEPKQLFWNGDCTRRCRCFRRNLIQCDPRQCKSDEECALRSGVRGCFSTKTSYCLAAGGGVFRTFDGAFLRFPANCAFVLSTICQKLPDISFQLIINFDKWSSPNLTIISPVYFYINEEQILINDRNTVKVNGTQVNVPFITGLATKIYSSEGFLVIDTSPDIQIYYNGFNVIKISISERLQNKVCGLCGNFNGDMTDDYVTLRGKPVVSSVVLAQSWKTNGMQKRPLAPSCNELQFSQYAATCDNVHIQAMQGDGYCLKLTDMKGFFQPCYGLLDPLPFYESCYLDGCYNHKKFQLCGSLAAYGEACRSFGILSTEWIEKENCSGVVEDPCVGADCPNRTCELDNGGELCGCIEPPPYGNNSHDIIDAEVTCKAAQMEVSISKCKLFQLGFEREGVRINDRQCSGIEGEDFISFQINNTKGNCGNIVQSNGTHIMYKNTIWIESANNTGNIITRDRTINVEFSCAYELDIKISLDSVVKPMLSVINLTVPTQEGSFTTKMALYKNASYKHPYRQGEVVLTTRDVLYVGVFVVGADSTHLILTLNKCYATPSRDSNDKLRYFIIEGGCQNIKDNTIGIEENGVSLTCRFHVTVFKFIGDYDEVHLHCAVSLCDSEKYSCKINCPQNSRIATDYSKEHKEQIISVGPIRRKRLDWCEDNGGCEQICTSRVDGPLCSCVTGSLQEDGRSCRASNSSVELQVWTLLLIMTQISLWHLIYKSGATS.

The signal sequence occupies residues 1-24 (MNYSSLLRIWVSFIFALVRHQAQP). 8 N-linked (GlcNAc...) asparagine glycosylation sites follow: asparagine 34, asparagine 187, asparagine 215, asparagine 278, asparagine 455, asparagine 506, asparagine 528, and asparagine 560. One can recognise an NIDO domain in the interval 98–252 (PFWADVHNGI…GRWAFKVDGK (155 aa)). The VWFC domain maps to 260 to 314 (CTSRGQFLRRGEVFWDDLNCTIKCRCLDFNNEIYCQEASCSPYEVCEPKGRFFYC). In terms of domain architecture, VWFD 1 spans 320–500 (STCVVFGEPH…RVYHADWKCG (181 aa)). Disulfide bonds link cysteine 322-cysteine 461 and cysteine 344-cysteine 499. Positions 597–650 (CPSFSHYSVCTSSCPDTCSDLTASQNCATPCTEGCECNEGFVLSTSQCVPLHKC) constitute a TIL 1 domain. N-linked (GlcNAc...) asparagine glycosylation is found at asparagine 670, asparagine 687, asparagine 813, asparagine 843, asparagine 855, asparagine 898, asparagine 920, asparagine 931, and asparagine 949. Residues 711–886 (TVCLLSQNQV…SWTTFEEICN (176 aa)) enclose the VWFD 2 domain. Cysteine 713 and cysteine 849 form a disulfide bridge. The TIL 2 domain occupies 984-1036 (CPENSHFEECMTCTETCETLALGPICVDSCSEGCQCDEGYALQGSQCVPRSEC). 4 N-linked (GlcNAc...) asparagine glycosylation sites follow: asparagine 1048, asparagine 1064, asparagine 1235, and asparagine 1364. Residues 1098–1278 (ASCIVSGYGH…SWVKRDTFCQ (181 aa)) form the VWFD 3 domain. Cystine bridges form between cysteine 1100/cysteine 1241 and cysteine 1122/cysteine 1277. Residues 1372–1425 (CPPNSHYESCVSVCQPRCAAIRLKSDCNHYCVEGCQCDAGYVLNGKSCILPHNC) form the TIL 3 domain. In terms of domain architecture, VWFD 4 spans 1485–1666 (SYCLAAGGGV…QKRPLAPSCN (182 aa)). 7 disulfides stabilise this stretch: cysteine 1487/cysteine 1622, cysteine 1509/cysteine 1665, cysteine 1717/cysteine 1775, cysteine 1741/cysteine 1784, cysteine 1786/cysteine 1818, cysteine 1806/cysteine 1898, and cysteine 1837/cysteine 1857. Residues asparagine 1538, asparagine 1565, asparagine 1756, asparagine 1772, asparagine 1794, asparagine 1851, asparagine 1864, asparagine 1880, asparagine 1920, and asparagine 1939 are each glycosylated (N-linked (GlcNAc...) asparagine). In terms of domain architecture, ZP spans 1805–2059 (TCKAAQMEVS…YSCKINCPQN (255 aa)). Intrachain disulfides connect cysteine 1980-cysteine 2040, cysteine 2001-cysteine 2056, and cysteine 2045-cysteine 2052. Asparagine 2091 carries GPI-anchor amidated asparagine lipidation. Residues 2092-2155 (GGCEQICTSR…HLIYKSGATS (64 aa)) constitute a propeptide, removed in mature form.

May form homomeric filament after self-association or heteromeric filament after association with beta-tectorin. Interacts with CEACAM16. In terms of processing, 3 products of tectorin seem to exist: HMM, MMM and LMM. They may be generated by active processing or the result of proteolysis occurring between intrachain disulfide bonds. The presence of a hydrophobic C-terminus preceded by a potential cleavage site strongly suggests that tectorins are synthesized as glycosylphosphatidylinositol-linked, membrane-bound precursors. Tectorins are targeted to the apical surface of the inner ear epithelia by the lipid and proteolytically released into the extracellular compartment. In terms of tissue distribution, cochlea-specific.

It localises to the cell membrane. Its subcellular location is the secreted. It is found in the extracellular space. The protein localises to the extracellular matrix. In terms of biological role, one of the major non-collagenous components of the tectorial membrane. The tectorial membrane is an extracellular matrix of the inner ear that covers the neuroepithelium of the cochlea and contacts the stereocilia bundles of specialized sensory hair cells. Sound induces movement of these hair cells relative to the tectorial membrane, deflects the stereocilia and leads to fluctuations in hair-cell membrane potential, transducing sound into electrical signals. The chain is Alpha-tectorin (Tecta) from Mus musculus (Mouse).